We begin with the raw amino-acid sequence, 79 residues long: Hemoglobin subunit zeta (79 aa).

Ser1 bears the N-acetylserine mark. In terms of domain architecture, Globin spans 1-79 (SLTKTXXTII…FKLLSHXFLV (79 aa)). Phosphoserine occurs at positions 38 and 53. Residue His59 coordinates heme b.

Belongs to the globin family. In terms of assembly, heterotetramer of two zeta chains and two epsilon chains.

Its function is as follows. The zeta chain is an alpha-type chain of mammalian embryonic hemoglobin. The chain is Hemoglobin subunit zeta from Notamacropus eugenii (Tammar wallaby).